The sequence spans 308 residues: Coenzyme PQQ synthesis protein B (308 aa).

It belongs to the PqqB family.

It functions in the pathway cofactor biosynthesis; pyrroloquinoline quinone biosynthesis. Its function is as follows. May be involved in the transport of PQQ or its precursor to the periplasm. This is Coenzyme PQQ synthesis protein B from Rhodopseudomonas palustris (strain TIE-1).